Reading from the N-terminus, the 487-residue chain is Virulence sensor histidine kinase PhoQ (487 aa).

The Cytoplasmic portion of the chain corresponds to 1–16 (MNKFARHFLPLSLRVR). The helical transmembrane segment at 17-37 (FLLATAGVVLVLSLAYGIVAL) threads the bilayer. At 38 to 193 (VGYSVSFDKT…ELKRSYMVWS (156 aa)) the chain is on the periplasmic side. 2 residues coordinate a divalent metal cation: D151 and D152. A helical membrane pass occupies residues 194–214 (WFVYVLAANLLLVIPLLWIAA). Positions 215–266 (WWSLRPIEALAREVRELEDHHREMLNPETTRELTSLVRNLNQLLKSERERYN) constitute an HAMP domain. At 215 to 487 (WWSLRPIEAL…GRQHPTQKEE (273 aa)) the chain is on the cytoplasmic side. A Histidine kinase domain is found at 274–481 (DLTHSLKTPL…RMEVVFGRQH (208 aa)). At H277 the chain carries Phosphohistidine; by autocatalysis. Residue N386 participates in Mg(2+) binding. ATP contacts are provided by residues 386–394 (NVLDNACKY), 416–421 (DDGPGI), and 435–447 (RADTLRPGQGVGL). Q443 serves as a coordination point for Mg(2+).

Homodimer.

The protein localises to the cell inner membrane. It carries out the reaction ATP + protein L-histidine = ADP + protein N-phospho-L-histidine.. In terms of biological role, member of the two-component regulatory system PhoP/PhoQ which regulates the expression of genes involved in virulence and resistance to host defense antimicrobial peptides. In low periplasmic Mg(2+), PhoQ functions as a membrane-associated protein kinase that undergoes autophosphorylation and subsequently transfers the phosphate to PhoP, which results in the expression of PhoP-activated genes (PAG) and repression of PhoP-repressed genes (PRG). In high periplasmic Mg(2+), acts as a protein phosphatase that dephosphorylates phospho-PhoP, which results in the repression of PAG and may lead to expression of some PRG. Promotes intramacrophage survival of S.typhi. Is required to enhance bacterial resistance to bile in the human intestinal cells. In Salmonella typhi, this protein is Virulence sensor histidine kinase PhoQ (phoQ).